Reading from the N-terminus, the 908-residue chain is Zinc finger and BTB domain-containing protein 41 (908 aa).

Positions threonine 38 to proline 59 are disordered. The BTB domain occupies cysteine 89 to lysine 153. The segment at histidine 208 to histidine 231 adopts a C2H2-type 1 zinc-finger fold. Over residues arginine 252 to proline 261 the composition is skewed to basic residues. The disordered stretch occupies residues arginine 252–histidine 344. A compositionally biased stretch (acidic residues) spans threonine 267–aspartate 276. The segment covering aspartate 279 to serine 296 has biased composition (basic and acidic residues). Over residues glutamate 297–alanine 336 the composition is skewed to acidic residues. 13 C2H2-type zinc fingers span residues leucine 360–histidine 382, phenylalanine 388–histidine 410, histidine 421–histidine 444, tryptophan 462–histidine 484, phenylalanine 490–histidine 513, phenylalanine 517–histidine 540, tryptophan 546–histidine 568, histidine 574–histidine 596, tyrosine 602–histidine 624, histidine 630–histidine 653, histidine 667–histidine 689, tyrosine 695–histidine 717, and phenylalanine 723–histidine 746.

The protein localises to the nucleus. Functionally, may be involved in transcriptional regulation. This chain is Zinc finger and BTB domain-containing protein 41 (Zbtb41), found in Mus musculus (Mouse).